A 270-amino-acid chain; its full sequence is Ethanolamine ammonia-lyase small subunit (270 aa).

3 residues coordinate adenosylcob(III)alamin: valine 161, glutamate 182, and cysteine 211.

It belongs to the EutC family. The basic unit is a heterodimer which dimerizes to form tetramers. The heterotetramers trimerize; 6 large subunits form a core ring with 6 small subunits projecting outwards. It depends on adenosylcob(III)alamin as a cofactor.

It localises to the bacterial microcompartment. The catalysed reaction is ethanolamine = acetaldehyde + NH4(+). It functions in the pathway amine and polyamine degradation; ethanolamine degradation. In terms of biological role, catalyzes the deamination of various vicinal amino-alcohols to oxo compounds. Allows this organism to utilize ethanolamine as the sole source of nitrogen and carbon in the presence of external vitamin B12. The chain is Ethanolamine ammonia-lyase small subunit from Azotobacter vinelandii (strain DJ / ATCC BAA-1303).